We begin with the raw amino-acid sequence, 453 residues long: Bis(5'-adenosyl)-triphosphatase ENPP4 (453 aa).

The signal sequence occupies residues M1 to G18. Over N19 to A407 the chain is Extracellular. Zn(2+) contacts are provided by D34 and T70. The AMP-threonine intermediate role is filled by T70. Residues N91 and Y154 each coordinate substrate. Residue N166 is glycosylated (N-linked (GlcNAc...) asparagine). Zn(2+) is bound by residues D189, H193, D237, and H238. D189 contributes to the substrate binding site. A disulfide bridge links C254 with C287. N276 carries an N-linked (GlcNAc...) asparagine glycan. Residue H336 participates in Zn(2+) binding. A disulfide bond links C394 and C401. A helical transmembrane segment spans residues I408–M428. The Cytoplasmic portion of the chain corresponds to Q429–G453.

The protein belongs to the nucleotide pyrophosphatase/phosphodiesterase family. The cofactor is Zn(2+).

It localises to the cell membrane. The catalysed reaction is P(1),P(3)-bis(5'-adenosyl) triphosphate + H2O = AMP + ADP + 2 H(+). Hydrolyzes extracellular Ap3A into AMP and ADP, and Ap4A into AMP and ATP. Ap3A and Ap4A are diadenosine polyphosphates thought to induce proliferation of vascular smooth muscle cells. Acts as a procoagulant, mediating platelet aggregation at the site of nascent thrombus via release of ADP from Ap3A and activation of ADP receptors. This chain is Bis(5'-adenosyl)-triphosphatase ENPP4 (ENPP4), found in Bos taurus (Bovine).